We begin with the raw amino-acid sequence, 278 residues long: Phosphatidylglycerol--prolipoprotein diacylglyceryl transferase (278 aa).

Helical transmembrane passes span 21–41, 54–74, and 88–108; these read WYGI…QASV, IIFW…VIFQ, and IWHG…TGII. R136 serves as a coordination point for a 1,2-diacyl-sn-glycero-3-phospho-(1'-sn-glycerol). The next 2 helical transmembrane spans lie at 176 to 196 and 234 to 254; these read QPTF…LILL and IRVA…IMII.

It belongs to the Lgt family.

It localises to the cell membrane. It catalyses the reaction L-cysteinyl-[prolipoprotein] + a 1,2-diacyl-sn-glycero-3-phospho-(1'-sn-glycerol) = an S-1,2-diacyl-sn-glyceryl-L-cysteinyl-[prolipoprotein] + sn-glycerol 1-phosphate + H(+). It participates in protein modification; lipoprotein biosynthesis (diacylglyceryl transfer). In terms of biological role, catalyzes the transfer of the diacylglyceryl group from phosphatidylglycerol to the sulfhydryl group of the N-terminal cysteine of a prolipoprotein, the first step in the formation of mature lipoproteins. This is Phosphatidylglycerol--prolipoprotein diacylglyceryl transferase from Staphylococcus xylosus.